A 384-amino-acid polypeptide reads, in one-letter code: Aryl-hydrocarbon-interacting protein-like 1 (384 aa).

Residues 53 to 145 enclose the PPIase FKBP-type domain; sequence RQVGQPMHII…DLDELQKEPQ (93 aa). TPR repeat units lie at residues 178–211, 230–263, and 264–297; these read VPVL…LRNL, NTLI…HPGI, and VKAY…EPSM. The segment at 328-384 is disordered; the sequence is SQGATQPPAEPPTEPPAQSSTEPPAEPPPAPSAELSAGPPAETATEPPPSPGHSLQH. A compositionally biased stretch (low complexity) spans 359 to 372; sequence SAELSAGPPAETAT.

As to quaternary structure, interacts with NUB1.

The protein localises to the cytoplasm. It localises to the nucleus. Its function is as follows. May be important in protein trafficking and/or protein folding and stabilization. The chain is Aryl-hydrocarbon-interacting protein-like 1 (AIPL1) from Pan paniscus (Pygmy chimpanzee).